Reading from the N-terminus, the 250-residue chain is MILRIIIFVIIILVVSLLLIYFVNKKPIINTQIENYSDIKNKFKTGDIILFSCRKHNTFIDEIKYFSRTKLIGSEFGHVGLILRDKKKLYVIEFTDYEHPGDQVAKRYHDLGKGGMRVIELETALREYNKDHMGCYAVRFISQEIPNDIFYDKIKKHRHKIFESKPKLLLLAFIDMLVMHKMSSDLATIFHNEDRMTCGEFVHTVLNDCNAIADYPSKIFWPYIVEDSDFNKILRSDISYSRLVKFIFDP.

A helical membrane pass occupies residues 2 to 22; the sequence is ILRIIIFVIIILVVSLLLIYF.

The protein localises to the membrane. This is an uncharacterized protein from Acanthamoeba polyphaga (Amoeba).